The primary structure comprises 140 residues: Peptide methionine sulfoxide reductase MsrB (140 aa).

The MsrB domain maps to 10–132 (EEDWKSVLTP…NSVSLGFTKE (123 aa)). Residues C49, C52, C98, and C101 each coordinate Zn(2+). The Nucleophile role is filled by C121.

It belongs to the MsrB Met sulfoxide reductase family. The cofactor is Zn(2+).

The enzyme catalyses L-methionyl-[protein] + [thioredoxin]-disulfide + H2O = L-methionyl-(R)-S-oxide-[protein] + [thioredoxin]-dithiol. This is Peptide methionine sulfoxide reductase MsrB from Methanosarcina mazei (strain ATCC BAA-159 / DSM 3647 / Goe1 / Go1 / JCM 11833 / OCM 88) (Methanosarcina frisia).